The following is a 574-amino-acid chain: Septation ring formation regulator EzrA (574 aa).

Over 1–7 the chain is Extracellular; that stretch reads MPTGTII. A helical membrane pass occupies residues 8–26; sequence LIVSIVIILIIAYVACLIV. The Cytoplasmic portion of the chain corresponds to 27 to 574; that stretch reads RKRNDNLLVA…YEKTREAIRY (548 aa). Positions 105-189 form a coiled coil; it reads SAKNAIDSID…IEVEFSEFVM (85 aa).

The protein belongs to the EzrA family.

It localises to the cell membrane. Negative regulator of FtsZ ring formation; modulates the frequency and position of FtsZ ring formation. Inhibits FtsZ ring formation at polar sites. Interacts either with FtsZ or with one of its binding partners to promote depolymerization. This Streptococcus suis (strain 98HAH33) protein is Septation ring formation regulator EzrA.